The sequence spans 481 residues: O-acetyltransferase andG (481 aa).

This sequence belongs to the fumigaclavine B O-acetyltransferase family. Monomer.

It functions in the pathway secondary metabolite biosynthesis; terpenoid biosynthesis. In terms of biological role, O-acetyltransferase; part of the gene cluster that mediates the biosynthesis of anditomin, a fungal meroterpenoid. The first step of the pathway is the synthesis of 3,5-dimethylorsellinic acid (DMOA) by the polyketide synthase andM. DMOA is then converted to the phthalide compound 5,7-dihydroxy-4,6-dimethylphthalide (DHDMP) by the cytochrome P450 monooxygenase andK, which is further prenylated by the prenyltransferase andD to yield farnesyl-DHDMP. Further epoxidation by the FAD-dependent monooxygenase andE leads to epoxyfarnesyl-DHDMP. The next step involves the terpene cyclase andB that converts epoxyfarnesyl-DHDMP into preandiloid A through opening of the epoxide ring followed by the cyclization of the farnesyl moiety. Preandiloid A is in turn oxidized at the C-3 hydroxyl group to yield preandiloid B by the dehydrogenase andC. The dioxygenase andA is solely responsible for the dehydrogenation of preandiloid B leading to the enone preandiloid C, as well as for the intriguing structural rearrangement to generate the bicyclo[2.2.2]octane core, transforming preandiloid C into andiconin. FAD-binding monooxygenase andJ then produces andilesin D which is reduced by dehydrogenase andI to yield andilesin A. Action of acetyltransferase andG followed by a spontaneous acetate elimination leads then to andilesin B, which is in turn substrate of the short chain dehydrogenase andH to yield andilesin C. Finally, the dioxygenase andF catalyzes the transformation of andilesin C to anditomin. The sequence is that of O-acetyltransferase andG from Emericella variicolor (Aspergillus stellatus).